Here is a 175-residue protein sequence, read N- to C-terminus: MENLPPGYRPNVGVCLINSDNLVFVASRLNVPGAWQMPQGGIEDGEDPKSAAMRELQEETGVVSAEIVSEVPNWLTYDFPPAVKAKVNRLWGGEWHGQAQKWYLVRLRNDEDEKEINLANNEADSEFAEWKWAKPEEVVEQAVDYKRPTYEEVIKTFGSFLNDTGRAAKCKSAKW.

Residues 7–155 (GYRPNVGVCL…KRPTYEEVIK (149 aa)) form the Nudix hydrolase domain. Mn(2+) is bound by residues Gly40, Glu55, and Glu59. Residues 40 to 61 (GGIEDGEDPKSAAMRELQEETG) carry the Nudix box motif.

The protein belongs to the Nudix hydrolase family. Requires Mn(2+) as cofactor.

The enzyme catalyses P(1),P(4)-bis(5'-guanosyl) tetraphosphate + H2O = GMP + GTP + 2 H(+). Mediates the hydrolysis of diadenosine 5',5''-P(1)P(4) tetraphosphate (Ap(4)A), a signaling molecule involved in regulation of DNA replication and repair. The protein is Nudix hydrolase 25 of Arabidopsis thaliana (Mouse-ear cress).